A 437-amino-acid polypeptide reads, in one-letter code: Enolase 1 (437 aa).

A (2R)-2-phosphoglycerate-binding site is contributed by Gln-164. Catalysis depends on Glu-206, which acts as the Proton donor. The Mg(2+) site is built by Asp-244, Glu-289, and Asp-316. The (2R)-2-phosphoglycerate site is built by Lys-341, Arg-370, Ser-371, and Lys-392. Catalysis depends on Lys-341, which acts as the Proton acceptor.

It belongs to the enolase family. Requires Mg(2+) as cofactor.

It is found in the cytoplasm. It localises to the secreted. The protein resides in the cell surface. The catalysed reaction is (2R)-2-phosphoglycerate = phosphoenolpyruvate + H2O. The protein operates within carbohydrate degradation; glycolysis; pyruvate from D-glyceraldehyde 3-phosphate: step 4/5. In terms of biological role, catalyzes the reversible conversion of 2-phosphoglycerate (2-PG) into phosphoenolpyruvate (PEP). It is essential for the degradation of carbohydrates via glycolysis. The chain is Enolase 1 from Desulfitobacterium hafniense (strain Y51).